A 108-amino-acid polypeptide reads, in one-letter code: Nucleoid-associated protein Bphyt_1827 (108 aa).

The interval alanine 87–phenylalanine 108 is disordered. The segment covering proline 99–phenylalanine 108 has biased composition (pro residues).

It belongs to the YbaB/EbfC family. In terms of assembly, homodimer.

The protein resides in the cytoplasm. It localises to the nucleoid. Its function is as follows. Binds to DNA and alters its conformation. May be involved in regulation of gene expression, nucleoid organization and DNA protection. The polypeptide is Nucleoid-associated protein Bphyt_1827 (Paraburkholderia phytofirmans (strain DSM 17436 / LMG 22146 / PsJN) (Burkholderia phytofirmans)).